The chain runs to 290 residues: MKSGFVSIVGRTNAGKSSILNSLLEEKIAMVSHKQNATRRKINAIIMHEKNQVIFIDTPGLHASSKAINQLMIDLAIKSIADCDVILFVASIYDDIIDYENFLKLNPKVPHIVLINKVDLADKKTLLSKLAQYNQFSSYFSAIIPYSIKQKFHKKILLDELVKYLPEHPYYFDPEFITTTNEKDIYRDFILEAIYENLSDEIPYTTEVRIDKIKELKTIYYINATIISSTNSHKGMILGKDGATIKRIGKEARVKIEKLAQKKVMLKLFVQLEKNWHKNEQNLKKILYDE.

In terms of domain architecture, Era-type G spans 2 to 167; the sequence is KSGFVSIVGR…LDELVKYLPE (166 aa). Positions 10–17 are G1; that stretch reads GRTNAGKS. 10 to 17 is a GTP binding site; sequence GRTNAGKS. Positions 36 to 40 are G2; sequence NATRR. A G3 region spans residues 57–60; that stretch reads DTPG. Residues 57 to 61 and 116 to 119 contribute to the GTP site; these read DTPGL and NKVD. Positions 116 to 119 are G4; it reads NKVD. The segment at 146 to 148 is G5; the sequence is YSI. Positions 194–274 constitute a KH type-2 domain; the sequence is IYENLSDEIP…MLKLFVQLEK (81 aa).

Belongs to the TRAFAC class TrmE-Era-EngA-EngB-Septin-like GTPase superfamily. Era GTPase family. As to quaternary structure, monomer.

It is found in the cytoplasm. Its subcellular location is the cell inner membrane. An essential GTPase that binds both GDP and GTP, with rapid nucleotide exchange. Plays a role in 16S rRNA processing and 30S ribosomal subunit biogenesis and possibly also in cell cycle regulation and energy metabolism. The protein is GTPase Era of Campylobacter lari (strain RM2100 / D67 / ATCC BAA-1060).